The primary structure comprises 89 residues: Large ribosomal subunit protein bL28 (89 aa).

It belongs to the bacterial ribosomal protein bL28 family.

In Chlamydia felis (strain Fe/C-56) (Chlamydophila felis), this protein is Large ribosomal subunit protein bL28.